We begin with the raw amino-acid sequence, 807 residues long: MPKQDSLWLKSLRWIQKHLVHTIVVPQDPFADLNLDTSRPLAYVMKTESLSDIAALSEVTEKLGLPSPYEPLVVNGVVAPRVVCLQGRKPLFGERAGNEPFLECFMRLLAVHKERPELDIQLVPVSLYWGRTPGKEDDTMKAAVLERENPTWLRKCFMILFLGRHNFVQFSNAVSLRYMADEHGTDMGIAHKLARVARVHFRRQRKVMTGPLLPNRQALFDSLLKSESLRKAIQEEAVSKKISETQARETAIEYLDEIAANYSDSLVRIAERFLTWLWNKLYSGINIKGAEHIRQLHHDGHEIVYVPCHRSHMDYLLLSYILYYQGMVPPHIAAGINLNFWPAGPLFRRGGAFFIRRSFNGNKLYTAVFREYLDQLFAKGYSVEYFSEGGRSRTGRLLAPKTGMIAMTMNSVLRGIERPVTLVPVYLGYDHVMEVATYHKELSGKKKQKESVWQVFGAIRKLGNFGQGYVNFGEPITLQTFLNEMAPNWRAELADDPEQKPTWLTPAVNVLANRVMTRINDAAAASSVTLTSLALLASEQNALERCLLERQLDLYLTLLKRVPYTSFTSVAEGDGKHLVQQGINLNKFSVSSDPLGEIVSIDANQAISMTYYRNNIIHLFIIPSLIASCLTHNEQSQRQQIVAIVNDFYPLLKAELFMGIKDIPSYVNQVLDLFIEQGLITESDNLSVVTEHSSQLVLLSGSVSETLQRYAIIFNLLAHRPKMERSELESESHLLAQRLGALHGITAPEFYDKKLYGTLSVKLKELGYLSDKDDKSDVKRIRDQANSLLRASVRQTIVASVTAEHIS.

Positions 308 to 313 (CHRSHM) match the HXXXXD motif motif.

Belongs to the GPAT/DAPAT family.

The protein localises to the cell inner membrane. The enzyme catalyses sn-glycerol 3-phosphate + an acyl-CoA = a 1-acyl-sn-glycero-3-phosphate + CoA. The protein operates within phospholipid metabolism; CDP-diacylglycerol biosynthesis; CDP-diacylglycerol from sn-glycerol 3-phosphate: step 1/3. This is Glycerol-3-phosphate acyltransferase from Shewanella putrefaciens (strain CN-32 / ATCC BAA-453).